The sequence spans 303 residues: Succinate--CoA ligase [ADP-forming] subunit alpha (303 aa).

Residues 20–23 (TGSE), lysine 46, and 108–110 (ITE) each bind CoA. Tyrosine 173 contacts substrate. Histidine 259 serves as the catalytic Tele-phosphohistidine intermediate.

It belongs to the succinate/malate CoA ligase alpha subunit family. In terms of assembly, heterotetramer of two alpha and two beta subunits.

It catalyses the reaction succinate + ATP + CoA = succinyl-CoA + ADP + phosphate. The catalysed reaction is GTP + succinate + CoA = succinyl-CoA + GDP + phosphate. It functions in the pathway carbohydrate metabolism; tricarboxylic acid cycle; succinate from succinyl-CoA (ligase route): step 1/1. Functionally, succinyl-CoA synthetase functions in the citric acid cycle (TCA), coupling the hydrolysis of succinyl-CoA to the synthesis of either ATP or GTP and thus represents the only step of substrate-level phosphorylation in the TCA. The alpha subunit of the enzyme binds the substrates coenzyme A and phosphate, while succinate binding and nucleotide specificity is provided by the beta subunit. This chain is Succinate--CoA ligase [ADP-forming] subunit alpha, found in Mycobacterium bovis (strain ATCC BAA-935 / AF2122/97).